The following is a 106-amino-acid chain: Immunoglobulin lambda constant 3 (106 aa).

The Ig-like domain maps to 7-101; that stretch reads PSVTLFPPSS…EGSTVEKTVA (95 aa). Cys-28 and Cys-87 are oxidised to a cystine.

Immunoglobulins are composed of two identical heavy chains and two identical light chains; disulfide-linked.

Its subcellular location is the secreted. It localises to the cell membrane. Its function is as follows. Constant region of immunoglobulin light chains. Immunoglobulins, also known as antibodies, are membrane-bound or secreted glycoproteins produced by B lymphocytes. In the recognition phase of humoral immunity, the membrane-bound immunoglobulins serve as receptors which, upon binding of a specific antigen, trigger the clonal expansion and differentiation of B lymphocytes into immunoglobulins-secreting plasma cells. Secreted immunoglobulins mediate the effector phase of humoral immunity, which results in the elimination of bound antigens. The antigen binding site is formed by the variable domain of one heavy chain, together with that of its associated light chain. Thus, each immunoglobulin has two antigen binding sites with remarkable affinity for a particular antigen. The variable domains are assembled by a process called V-(D)-J rearrangement and can then be subjected to somatic hypermutations which, after exposure to antigen and selection, allow affinity maturation for a particular antigen. The chain is Immunoglobulin lambda constant 3 from Homo sapiens (Human).